Reading from the N-terminus, the 549-residue chain is Glucose-6-phosphate isomerase (549 aa).

E355 acts as the Proton donor in catalysis. Residues H386 and K514 contribute to the active site.

This sequence belongs to the GPI family.

The protein resides in the cytoplasm. It carries out the reaction alpha-D-glucose 6-phosphate = beta-D-fructose 6-phosphate. The protein operates within carbohydrate biosynthesis; gluconeogenesis. It functions in the pathway carbohydrate degradation; glycolysis; D-glyceraldehyde 3-phosphate and glycerone phosphate from D-glucose: step 2/4. In terms of biological role, catalyzes the reversible isomerization of glucose-6-phosphate to fructose-6-phosphate. This Salmonella agona (strain SL483) protein is Glucose-6-phosphate isomerase.